Consider the following 310-residue polypeptide: Tyrosine recombinase XerC (310 aa).

The Core-binding (CB) domain occupies 1-92; the sequence is MDELIKEFDR…SLRAFFKYLH (92 aa). One can recognise a Tyr recombinase domain in the interval 113-300; it reads YIPAVLSVDE…SVNRLMAVYD (188 aa). Active-site residues include R153, K177, H252, R255, and H278. The O-(3'-phospho-DNA)-tyrosine intermediate role is filled by Y287.

This sequence belongs to the 'phage' integrase family. XerC subfamily. As to quaternary structure, forms a cyclic heterotetrameric complex composed of two molecules of XerC and two molecules of XerD.

It localises to the cytoplasm. Its function is as follows. Site-specific tyrosine recombinase, which acts by catalyzing the cutting and rejoining of the recombining DNA molecules. The XerC-XerD complex is essential to convert dimers of the bacterial chromosome into monomers to permit their segregation at cell division. It also contributes to the segregational stability of plasmids. In Syntrophus aciditrophicus (strain SB), this protein is Tyrosine recombinase XerC.